Reading from the N-terminus, the 323-residue chain is Cell division protein ZipA (323 aa).

The Periplasmic segment spans residues 1 to 5 (MQELR). A helical transmembrane segment spans residues 6–26 (FVLIVVGALAIAALLFHGLWT). Topologically, residues 27-323 (SKKEGKAKFG…QIVEFNAANA (297 aa)) are cytoplasmic. The segment at 35-92 (FGNKPLGKLDVDQEDKDTPGQERDFAPDPEDDFEIIRKDRKEPDFGMENSFDNKFSSD) is disordered. Composition is skewed to basic and acidic residues over residues 41–60 (GKLD…RDFA) and 68–78 (EIIRKDRKEPD).

Belongs to the ZipA family. Interacts with FtsZ via their C-terminal domains.

It is found in the cell inner membrane. Essential cell division protein that stabilizes the FtsZ protofilaments by cross-linking them and that serves as a cytoplasmic membrane anchor for the Z ring. Also required for the recruitment to the septal ring of downstream cell division proteins. In Vibrio campbellii (strain ATCC BAA-1116), this protein is Cell division protein ZipA.